Reading from the N-terminus, the 173-residue chain is Bilin biosynthesis protein PecF (173 aa).

This sequence belongs to the CpcE/RpcE/PecE family.

In terms of biological role, an enzyme involved in the biosynthesis of bilin. In Nostoc sp. (strain PCC 7120 / SAG 25.82 / UTEX 2576), this protein is Bilin biosynthesis protein PecF (pecF).